The primary structure comprises 376 residues: Growth/differentiation factor 8 (376 aa).

The first 24 residues, 1–24, serve as a signal peptide directing secretion; the sequence is MIQKPQMYVYIYLFVLIAAGPVDL. The propeptide occupies 25–267; that stretch reads NEDSEREANV…VTDTPKRSRR (243 aa). N-linked (GlcNAc...) asparagine glycosylation occurs at N72. Intrachain disulfides connect C273/C283, C282/C341, C310/C373, and C314/C375.

It belongs to the TGF-beta family. As to quaternary structure, homodimer; disulfide-linked. Interacts with WFIKKN2, leading to inhibit its activity. Interacts with FSTL3. In terms of processing, synthesized as large precursor molecule that undergoes proteolytic cleavage to generate an N-terminal propeptide and a disulfide linked C-terminal dimer, which is the biologically active molecule. The circulating form consists of a latent complex of the C-terminal dimer and other proteins, including its propeptide, which maintain the C-terminal dimer in a latent, inactive state. Ligand activation requires additional cleavage of the prodomain by a tolloid-like metalloproteinase.

Its subcellular location is the secreted. Acts specifically as a negative regulator of skeletal muscle growth. This is Growth/differentiation factor 8 (Mstn) from Rattus norvegicus (Rat).